We begin with the raw amino-acid sequence, 78 residues long: Hainantoxin-XX.2 (78 aa).

Residues 1–23 form the signal peptide; that stretch reads MKSATLLALSYLLIALYFLICEA. Positions 24–47 are excised as a propeptide; it reads EHSRYEEHEILEENMGDVVNLEQR. Disulfide bonds link Cys-49–Cys-62, Cys-56–Cys-66, and Cys-61–Cys-77.

This sequence belongs to the hainantoxin family. 20 subfamily. In terms of tissue distribution, expressed by the venom gland.

It localises to the secreted. In terms of biological role, moderately inhibits Kv1.1/KCNA1 and Kv1.2/KCNA2 and weakly inhibits Kv1.3/KCNA3, and Kv2.1/KCNB1 voltage-gated potassium channels. This is Hainantoxin-XX.2 from Cyriopagopus hainanus (Chinese bird spider).